Here is a 63-residue protein sequence, read N- to C-terminus: Large ribosomal subunit protein uL30 (63 aa).

The protein belongs to the universal ribosomal protein uL30 family. Part of the 50S ribosomal subunit.

This is Large ribosomal subunit protein uL30 from Hahella chejuensis (strain KCTC 2396).